We begin with the raw amino-acid sequence, 1183 residues long: Collagen adhesin (1183 aa).

Positions 1–29 (MNKNVLKFMVFIMLLNIITPLFNKNEAFA) are cleaved as a signal peptide. Residues 151–318 (ITSGNKSTNV…GKSFNHTVHN (168 aa)) form a collagen-binding region. 7 cross-links (isoaspartyl lysine isopeptide (Lys-Asn)) span residues 176-293 (KTGD…EFVN), 541-618 (KVWD…TITN), 631-715 (KNWD…IVTN), 728-805 (KVWD…TITN), 818-902 (KNWD…IVTN), 915-992 (KVWD…TITN), and 1005-1089 (KNWD…IVTN). The B1 repeat unit spans residues 533 to 719 (ETTSISGEKV…NLIVTNKYTP (187 aa)). The interval 533–1093 (ETTSISGEKV…NLIVTNKYTP (561 aa)) is 3 X 187 AA approximate tandem repeats. One copy of the B2 repeat lies at 720–906 (ETTSISGEKV…NLIVTNKYTP (187 aa)). One copy of the B3 repeat lies at 907 to 1093 (ETTSISGEKV…NLIVTNKYTP (187 aa)). A disordered region spans residues 1074 to 1150 (TTHVDNNDMG…KTKPENPLKE (77 aa)). 2 stretches are compositionally biased toward basic and acidic residues: residues 1101-1118 (YPEK…DHSN) and 1127-1150 (KPSK…PLKE). Positions 1151–1155 (LPKTG) match the LPXTG sorting signal motif. T1154 bears the Pentaglycyl murein peptidoglycan amidated threonine mark. The propeptide at 1155 to 1183 (GMKIITSWITWVFIGILGLYLILRKRFNS) is removed by sortase.

In terms of assembly, interacts (via N-terminus) with type I collagen. Interacts with host C1QA.

The protein localises to the secreted. Its subcellular location is the cell wall. Collagen-binding adhesin that mediates bacterial adherence to collagenous tissues such as cartilage. Participates in the infectious process by acting as a virulence factor in many different animal models of staphylococcal infections including arthritis, endocarditis and keratitis. Inhibits the activation of the classical complement pathway by interacting with host C1q and interfering with the association between host C1r with C1q. This is Collagen adhesin (cna) from Staphylococcus aureus.